The primary structure comprises 515 residues: Fatty acyl-CoA reductase 1 (515 aa).

Residues 1-465 (MVSIPEYYEG…ARKHLNKLRN (465 aa)) lie on the Cytoplasmic side of the membrane. Positions 451 to 507 (SGLPAARKHLNKLRNIRYGFNTILVILIWRIFIARSQMARNIWYFVVSLCYKFLSYF) are necessary and sufficient for PEX19-mediated localization into peroxisome membrane. The helical transmembrane segment at 466–483 (IRYGFNTILVILIWRIFI) threads the bilayer. The Peroxisomal segment spans residues 484–515 (ARSQMARNIWYFVVSLCYKFLSYFRASSTMRY).

The protein belongs to the fatty acyl-CoA reductase family. In terms of assembly, interacts with PEX19; PEX19 mediates the targeting of FAR1 to peroxisomes.

The protein localises to the peroxisome membrane. It carries out the reaction a long-chain fatty acyl-CoA + 2 NADPH + 2 H(+) = a long-chain primary fatty alcohol + 2 NADP(+) + CoA. The enzyme catalyses hexadecanoyl-CoA + 2 NADPH + 2 H(+) = hexadecan-1-ol + 2 NADP(+) + CoA. It catalyses the reaction octadecanoyl-CoA + 2 NADPH + 2 H(+) = octadecan-1-ol + 2 NADP(+) + CoA. The catalysed reaction is eicosanoyl-CoA + 2 NADPH + 2 H(+) = eicosan-1-ol + 2 NADP(+) + CoA. It carries out the reaction (9Z)-octadecenoyl-CoA + 2 NADPH + 2 H(+) = (9Z)-octadecen-1-ol + 2 NADP(+) + CoA. The enzyme catalyses (9Z,12Z)-octadecadienoyl-CoA + 2 NADPH + 2 H(+) = (9Z,12Z)-octadecadien-1-ol + 2 NADP(+) + CoA. It catalyses the reaction 16-methylheptadecanoyl-CoA + 2 NADPH + 2 H(+) = 16-methylheptadecan-1-ol + 2 NADP(+) + CoA. The catalysed reaction is 18-methylnonadecanoyl-CoA + 2 NADPH + 2 H(+) = 18-methylnonadecan-1-ol + 2 NADP(+) + CoA. Its function is as follows. Catalyzes the reduction of saturated and unsaturated C16 or C18 fatty acyl-CoA to fatty alcohols. It plays an essential role in the production of ether lipids/plasmalogens which synthesis requires fatty alcohols. In parallel, it is also required for wax monoesters production since fatty alcohols also constitute a substrate for their synthesis. This is Fatty acyl-CoA reductase 1 from Homo sapiens (Human).